The sequence spans 501 residues: Probable Xaa-Pro aminopeptidase pepP (501 aa).

Residues 1–25 form a disordered region; sequence MNYHSFLPLRRSSLSHSTTPPSKSR. Residues 12 to 25 are compositionally biased toward polar residues; that stretch reads SSLSHSTTPPSKSR. The Mn(2+) site is built by Asp-298, Asp-309, Glu-432, and Glu-472.

This sequence belongs to the peptidase M24B family. Requires Mn(2+) as cofactor.

It carries out the reaction Release of any N-terminal amino acid, including proline, that is linked to proline, even from a dipeptide or tripeptide.. In terms of biological role, catalyzes the removal of a penultimate prolyl residue from the N-termini of peptides. This chain is Probable Xaa-Pro aminopeptidase pepP (pepP), found in Metarhizium acridum (strain CQMa 102).